Here is a 185-residue protein sequence, read N- to C-terminus: MIDDIKSDSEERMSRAIEALGTHFNKIRTGRAHPSILDGVMVSYYGSATPLSQVANVTVLDARTLSISPWEKNIVPEIEKAIMKSDLGLNPVTTGDLIRVPMPMLTEETRKGYIKRARAEAESARVSIRNVRRDALAEVKALVKDKEISEDDERRAADEIQQITNKYVAEVDKALSAKEKDLMEI.

It belongs to the RRF family.

It localises to the cytoplasm. Responsible for the release of ribosomes from messenger RNA at the termination of protein biosynthesis. May increase the efficiency of translation by recycling ribosomes from one round of translation to another. This is Ribosome-recycling factor from Saccharophagus degradans (strain 2-40 / ATCC 43961 / DSM 17024).